The sequence spans 439 residues: Acyl-coenzyme A thioesterase 9, mitochondrial (439 aa).

The N-terminal 21 residues, 1 to 21 (MKRAAIRLWTLNKGLLTHGRG), are a transit peptide targeting the mitochondrion. HotDog ACOT-type domains lie at 85–209 (SYIE…RDSE) and 289–401 (EDTK…EKEV). N6-acetyllysine is present on Lys102.

It belongs to the acyl coenzyme A hydrolase family. In terms of assembly, interacts with NYAP1, NYAP2 and MYO16. In terms of tissue distribution, widely expressed.

It localises to the mitochondrion. Its subcellular location is the mitochondrion matrix. The protein localises to the mitochondrion inner membrane. The enzyme catalyses butanoyl-CoA + H2O = butanoate + CoA + H(+). It carries out the reaction propanoyl-CoA + H2O = propanoate + CoA + H(+). It catalyses the reaction hexadecanoyl-CoA + H2O = hexadecanoate + CoA + H(+). The catalysed reaction is octanoyl-CoA + H2O = octanoate + CoA + H(+). The enzyme catalyses decanoyl-CoA + H2O = decanoate + CoA + H(+). It carries out the reaction tetradecanoyl-CoA + H2O = tetradecanoate + CoA + H(+). It catalyses the reaction 4,8-dimethylnonanoyl-CoA + H2O = 4,8-dimethylnonanoate + CoA + H(+). The catalysed reaction is 3-methylbutanoyl-CoA + H2O = 3-methylbutanoate + CoA + H(+). The enzyme catalyses 2-methylpropanoyl-CoA + H2O = 2-methylpropanoate + CoA + H(+). It functions in the pathway lipid metabolism; fatty acid metabolism. Strongly inhibited by NADH and CoA. Mitochondrial acyl-CoA thioesterase. Catalyzes the hydrolysis of acyl-CoAs into free fatty acids and coenzyme A (CoA), regulating their respective intracellular levels. Shows a clear preference for hydrophobic short-, medium-, and long-chain saturated acyl-CoAs with some activity also with short-chain dicarboxylic CoA esters. Regulates both mitochondrial lipid and amino acid metabolism. This is Acyl-coenzyme A thioesterase 9, mitochondrial (Acot9) from Mus musculus (Mouse).